Consider the following 487-residue polypeptide: 2-aminomuconic semialdehyde dehydrogenase (487 aa).

Residue 231–236 participates in NAD(+) binding; the sequence is GSQPTA. Residue Glu-253 is the Proton acceptor of the active site. The active-site Nucleophile is the Cys-287.

The protein belongs to the aldehyde dehydrogenase family.

The protein localises to the cytoplasm. It carries out the reaction 2-aminomuconate 6-semialdehyde + NAD(+) + H2O = (2Z,4E)-2-aminomuconate + NADH + 2 H(+). It functions in the pathway amino-acid degradation; L-kynurenine degradation. Catalyzes the NAD-dependent oxidation of 2-aminomuconic semialdehyde of the kynurenine metabolic pathway in L-tryptophan degradation. This chain is 2-aminomuconic semialdehyde dehydrogenase (ALDH8A1), found in Bos taurus (Bovine).